Consider the following 110-residue polypeptide: Phosphoribosyl-ATP pyrophosphatase (110 aa).

Belongs to the PRA-PH family.

Its subcellular location is the cytoplasm. It carries out the reaction 1-(5-phospho-beta-D-ribosyl)-ATP + H2O = 1-(5-phospho-beta-D-ribosyl)-5'-AMP + diphosphate + H(+). Its pathway is amino-acid biosynthesis; L-histidine biosynthesis; L-histidine from 5-phospho-alpha-D-ribose 1-diphosphate: step 2/9. This chain is Phosphoribosyl-ATP pyrophosphatase, found in Pseudomonas syringae pv. syringae (strain B728a).